We begin with the raw amino-acid sequence, 280 residues long: Gastrula zinc finger protein XlCGF46.1 (280 aa).

C2H2-type zinc fingers lie at residues 6-28 (FACK…KLMH), 34-56 (FECT…QLIH), 62-84 (FVCP…LLCH), 90-112 (FTCK…KLTH), 118-140 (FICS…QLIH), 146-168 (YVCT…LRTH), 174-196 (FKCE…KVTH), 202-224 (FTCE…QLTH), 230-252 (FKCE…QRFH), and 258-280 (YKCN…ELSH).

Belongs to the krueppel C2H2-type zinc-finger protein family.

The protein resides in the nucleus. Its function is as follows. May be involved in transcriptional regulation. The sequence is that of Gastrula zinc finger protein XlCGF46.1 from Xenopus laevis (African clawed frog).